A 375-amino-acid polypeptide reads, in one-letter code: DNA replication and repair protein RecF (375 aa).

Residue 30 to 37 participates in ATP binding; the sequence is GENAQGKT.

This sequence belongs to the RecF family.

Its subcellular location is the cytoplasm. The RecF protein is involved in DNA metabolism; it is required for DNA replication and normal SOS inducibility. RecF binds preferentially to single-stranded, linear DNA. It also seems to bind ATP. This is DNA replication and repair protein RecF from Bacillus cereus (strain B4264).